The primary structure comprises 424 residues: UDP-N-acetylglucosamine 1-carboxyvinyltransferase (424 aa).

Position 22 to 23 (22 to 23 (KN)) interacts with phosphoenolpyruvate. Position 95 (Arg95) interacts with UDP-N-acetyl-alpha-D-glucosamine. Residue Cys119 is the Proton donor of the active site. Cys119 bears the 2-(S-cysteinyl)pyruvic acid O-phosphothioketal mark. Residues 124-128 (RPVDQ), Asp311, and Ile333 each bind UDP-N-acetyl-alpha-D-glucosamine.

Belongs to the EPSP synthase family. MurA subfamily.

The protein resides in the cytoplasm. It carries out the reaction phosphoenolpyruvate + UDP-N-acetyl-alpha-D-glucosamine = UDP-N-acetyl-3-O-(1-carboxyvinyl)-alpha-D-glucosamine + phosphate. The protein operates within cell wall biogenesis; peptidoglycan biosynthesis. Its function is as follows. Cell wall formation. Adds enolpyruvyl to UDP-N-acetylglucosamine. The sequence is that of UDP-N-acetylglucosamine 1-carboxyvinyltransferase from Polaromonas naphthalenivorans (strain CJ2).